The sequence spans 125 residues: Small ribosomal subunit protein uS12 (125 aa).

Aspartate 89 carries the post-translational modification 3-methylthioaspartic acid. A disordered region spans residues 105–125; that stretch reads AGVKDRKQARSKYGAKRPKAA. Basic residues predominate over residues 113-125; sequence ARSKYGAKRPKAA.

This sequence belongs to the universal ribosomal protein uS12 family. Part of the 30S ribosomal subunit. Contacts proteins S8 and S17. May interact with IF1 in the 30S initiation complex.

Functionally, with S4 and S5 plays an important role in translational accuracy. Interacts with and stabilizes bases of the 16S rRNA that are involved in tRNA selection in the A site and with the mRNA backbone. Located at the interface of the 30S and 50S subunits, it traverses the body of the 30S subunit contacting proteins on the other side and probably holding the rRNA structure together. The combined cluster of proteins S8, S12 and S17 appears to hold together the shoulder and platform of the 30S subunit. This Methylobacillus flagellatus (strain ATCC 51484 / DSM 6875 / VKM B-1610 / KT) protein is Small ribosomal subunit protein uS12.